The following is a 380-amino-acid chain: Probable tRNA sulfurtransferase (380 aa).

The 105-residue stretch at 58-162 (EEVIERLKKV…MAFVYAGVIE (105 aa)) folds into the THUMP domain. Residues 178–179 (LL), 203–204 (YF), R260, G282, and Q291 each bind ATP.

Belongs to the ThiI family.

It is found in the cytoplasm. The catalysed reaction is [ThiI sulfur-carrier protein]-S-sulfanyl-L-cysteine + a uridine in tRNA + 2 reduced [2Fe-2S]-[ferredoxin] + ATP + H(+) = [ThiI sulfur-carrier protein]-L-cysteine + a 4-thiouridine in tRNA + 2 oxidized [2Fe-2S]-[ferredoxin] + AMP + diphosphate. It carries out the reaction [ThiS sulfur-carrier protein]-C-terminal Gly-Gly-AMP + S-sulfanyl-L-cysteinyl-[cysteine desulfurase] + AH2 = [ThiS sulfur-carrier protein]-C-terminal-Gly-aminoethanethioate + L-cysteinyl-[cysteine desulfurase] + A + AMP + 2 H(+). The protein operates within cofactor biosynthesis; thiamine diphosphate biosynthesis. In terms of biological role, catalyzes the ATP-dependent transfer of a sulfur to tRNA to produce 4-thiouridine in position 8 of tRNAs, which functions as a near-UV photosensor. Also catalyzes the transfer of sulfur to the sulfur carrier protein ThiS, forming ThiS-thiocarboxylate. This is a step in the synthesis of thiazole, in the thiamine biosynthesis pathway. The sulfur is donated as persulfide by IscS. The polypeptide is Probable tRNA sulfurtransferase (Thermoanaerobacter pseudethanolicus (strain ATCC 33223 / 39E) (Clostridium thermohydrosulfuricum)).